An 880-amino-acid polypeptide reads, in one-letter code: MALRRSMGWPGLRPLLLAGLASLLLPGSAAAGLKLMGAPVKMTVSQGQPVKLNCSVEGMEDPDIHWMKDGTVVQNASQVSISISEHSWIGLLSLKSVERSDAGLYWCQVKDGEETKISQSVWLTVEGVPFFTVEPKDLAVPPNAPFQLSCEAVGPPEPVTIYWWRGLTKVGGPAPSPSVLNVTGVTQRTEFSCEARNIKGLATSRPAIVRLQAPPAAPFNTTVTTISSYNASVAWVPGADGLALLHSCTVQVAHAPGEWEALAVVVPVPPFTCLLRNLAPATNYSLRVRCANALGPSPYGDWVPFQTKGLAPARAPQNFHAIRTDSGLILEWEEVIPEDPGEGPLGPYKLSWVQENGTQDELMVEGTRANLTDWDPQKDLILRVCASNAIGDGPWSQPLVVSSHDHAGRQGPPHSRTSWVPVVLGVLTALITAAALALILLRKRRKETRFGQAFDSVMARGEPAVHFRAARSFNRERPERIEATLDSLGISDELKEKLEDVLIPEQQFTLGRMLGKGEFGSVREAQLKQEDGSFVKVAVKMLKADIIASSDIEEFLREAACMKEFDHPHVAKLVGVSLRSRAKGRLPIPMVILPFMKHGDLHAFLLASRIGENPFNLPLQTLVRFMVDIACGMEYLSSRNFIHRDLAARNCMLAEDMTVCVADFGLSRKIYSGDYYRQGCASKLPVKWLALESLADNLYTVHSDVWAFGVTMWEIMTRGQTPYAGIENAEIYNYLIGGNRLKQPPECMEEVYDLMYQCWSADPKQRPSFTCLRMELENILGHLSVLSTSQDPLYINIERAEQPTESGSPEVHCGERSSSEAGDGSGVGAVGGIPSDSRYIFSPGGLSESPGQLEQQPESPLNENQRLLLLQQGLLPHSSC.

The N-terminal stretch at 1–30 is a signal peptide; sequence MALRRSMGWPGLRPLLLAGLASLLLPGSAA. Ig-like C2-type domains are found at residues 31 to 118 and 129 to 209; these read AGLK…TKIS and PFFT…PAIV. Residues 31 to 419 are Extracellular-facing; it reads AGLKLMGAPV…QGPPHSRTSW (389 aa). N-linked (GlcNAc...) asparagine glycosylation is found at Asn-53, Asn-75, Asn-181, Asn-220, Asn-230, Asn-283, Asn-356, and Asn-370. Disulfide bonds link Cys-54/Cys-107 and Cys-150/Cys-193. Fibronectin type-III domains are found at residues 217–310 and 315–406; these read APFN…TKGL and APQN…SHDH. A helical transmembrane segment spans residues 420–440; it reads VPVVLGVLTALITAAALALIL. At 441-880 the chain is on the cytoplasmic side; sequence LRKRRKETRF…QQGLLPHSSC (440 aa). Ser-456 is modified (phosphoserine). One can recognise a Protein kinase domain in the interval 508-785; it reads FTLGRMLGKG…LENILGHLSV (278 aa). Residues 514–522 and Lys-540 contribute to the ATP site; that span reads LGKGEFGSV. Asp-645 acts as the Proton acceptor in catalysis. Tyr-671, Tyr-675, Tyr-676, and Tyr-794 each carry phosphotyrosine; by autocatalysis. Positions 800-864 are disordered; it reads AEQPTESGSP…QQPESPLNEN (65 aa). A phosphoserine mark is found at Ser-808 and Ser-859. Positions 849 to 864 are enriched in polar residues; the sequence is SPGQLEQQPESPLNEN.

This sequence belongs to the protein kinase superfamily. Tyr protein kinase family. AXL/UFO subfamily. As to quaternary structure, monomer and homodimer. Interacts (via N-terminus) with extracellular ligands TULP1 and GAS6. Interacts with PIK3R1; this interaction increases PI3-kinase activity. Post-translationally, autophosphorylated. In terms of tissue distribution, abundant in the brain and lower levels in other tissues.

The protein resides in the cell membrane. It carries out the reaction L-tyrosyl-[protein] + ATP = O-phospho-L-tyrosyl-[protein] + ADP + H(+). Functionally, receptor tyrosine kinase that transduces signals from the extracellular matrix into the cytoplasm by binding to several ligands including TULP1 or GAS6. Regulates many physiological processes including cell survival, migration and differentiation. Ligand binding at the cell surface induces dimerization and autophosphorylation of TYRO3 on its intracellular domain that provides docking sites for downstream signaling molecules. Following activation by ligand, interacts with PIK3R1 and thereby enhances PI3-kinase activity. Activates the AKT survival pathway, including nuclear translocation of NF-kappa-B and up-regulation of transcription of NF-kappa-B-regulated genes. TYRO3 signaling plays a role in various processes such as neuron protection from excitotoxic injury, platelet aggregation and cytoskeleton reorganization. Also plays an important role in inhibition of Toll-like receptors (TLRs)-mediated innate immune response by activating STAT1, which selectively induces production of suppressors of cytokine signaling SOCS1 and SOCS3. This chain is Tyrosine-protein kinase receptor TYRO3 (Tyro3), found in Mus musculus (Mouse).